The chain runs to 428 residues: Serine--tRNA ligase (428 aa).

Residue 235-237 coordinates L-serine; sequence TAE. 266–268 serves as a coordination point for ATP; sequence RSE. E289 is a binding site for L-serine. Position 353-356 (353-356) interacts with ATP; the sequence is EISS. S389 serves as a coordination point for L-serine.

The protein belongs to the class-II aminoacyl-tRNA synthetase family. Type-1 seryl-tRNA synthetase subfamily. Homodimer. The tRNA molecule binds across the dimer.

The protein localises to the cytoplasm. It catalyses the reaction tRNA(Ser) + L-serine + ATP = L-seryl-tRNA(Ser) + AMP + diphosphate + H(+). The enzyme catalyses tRNA(Sec) + L-serine + ATP = L-seryl-tRNA(Sec) + AMP + diphosphate + H(+). Its pathway is aminoacyl-tRNA biosynthesis; selenocysteinyl-tRNA(Sec) biosynthesis; L-seryl-tRNA(Sec) from L-serine and tRNA(Sec): step 1/1. Catalyzes the attachment of serine to tRNA(Ser). Is also able to aminoacylate tRNA(Sec) with serine, to form the misacylated tRNA L-seryl-tRNA(Sec), which will be further converted into selenocysteinyl-tRNA(Sec). The sequence is that of Serine--tRNA ligase from Shewanella amazonensis (strain ATCC BAA-1098 / SB2B).